Here is a 68-residue protein sequence, read N- to C-terminus: Sec-independent protein translocase protein TatA (68 aa).

The chain crosses the membrane as a helical span at residues 1-21 (MGSFSIWHWLIVLAVVLLLFG). Positions 48–68 (AAAADKSIDGKTVDHKSDEVR) are disordered. Over residues 53–68 (KSIDGKTVDHKSDEVR) the composition is skewed to basic and acidic residues.

It belongs to the TatA/E family. The Tat system comprises two distinct complexes: a TatABC complex, containing multiple copies of TatA, TatB and TatC subunits, and a separate TatA complex, containing only TatA subunits. Substrates initially bind to the TatABC complex, which probably triggers association of the separate TatA complex to form the active translocon.

The protein localises to the cell inner membrane. Part of the twin-arginine translocation (Tat) system that transports large folded proteins containing a characteristic twin-arginine motif in their signal peptide across membranes. TatA could form the protein-conducting channel of the Tat system. This chain is Sec-independent protein translocase protein TatA, found in Sinorhizobium medicae (strain WSM419) (Ensifer medicae).